We begin with the raw amino-acid sequence, 325 residues long: Putative gluconeogenesis factor (325 aa).

The protein belongs to the gluconeogenesis factor family.

Its subcellular location is the cytoplasm. In terms of biological role, required for morphogenesis under gluconeogenic growth conditions. This is Putative gluconeogenesis factor from Streptococcus pneumoniae serotype 4 (strain ATCC BAA-334 / TIGR4).